Here is a 478-residue protein sequence, read N- to C-terminus: Cytochrome P450 family 716 subfamily AD polypeptide 4 (478 aa).

A helical transmembrane segment spans residues 1–21 (MELFLPSVLLILTVFCFYYLF). Cys425 contacts heme.

The protein belongs to the cytochrome P450 family. Heme serves as cofactor. In terms of tissue distribution, mainly expressed in petioles and, to a lower extent, in roots.

The protein resides in the membrane. The catalysed reaction is (1S,3bR,4R,5aR,9aR,9bR,11aS)-1-[(4R)-5-[(2S)-3,3-dimethyloxiran-2-yl]-1,4-dihydroxybutan-2-yl]-3b,6,6,9a,11a-pentamethyl-7-oxo-1H,2H,3bH,4H,5H,5aH,6H,7H,9aH,9bH,10H,11H,11aH-cyclopenta[a]phenanthren-4-yl acetate + reduced [NADPH--hemoprotein reductase] + O2 = (1S,3bR,4R,5aR,9aR,9bR,11aS)-1-(1-hydroxy-4-oxobutan-2-yl)-3b,6,6,9a,11a-pentamethyl-7-oxo-1H,2H,3bH,4H,5H,5aH,6H,7H,9aH,9bH,10H,11H,11aH-cyclopenta[a]phenanthren-4-yl acetate + 2-methylpropanoate + oxidized [NADPH--hemoprotein reductase] + H2O + 2 H(+). Its pathway is secondary metabolite biosynthesis; terpenoid biosynthesis. Monooxygenase involved in the biosynthesis of limonoids triterpene natural products such as azadirachtin, an antifeedant widely used as bioinsecticide, and possessing many medicinal applications including anti-tumoral, anti-malarial, anti-rheumatic, antibacterial, anti-inflammatory, anti-pyretic and diuretic effects. Catalyzes the formation of (1S,3bR,4R,5aR,9aR,9bR,11aS)-1-(1-hydroxy-4-oxobutan-2-yl)-3b,6,6,9a,11a-pentamethyl-7-oxo-1H,2H,3bH,4H,5H,5aH,6H,7H,9aH,9bH,10H,11H,11aH-cyclopenta[a]phenanthren-4-yl acetate. This is Cytochrome P450 family 716 subfamily AD polypeptide 4 from Melia azedarach (Chinaberry tree).